We begin with the raw amino-acid sequence, 185 residues long: Large ribosomal subunit protein uL5 (185 aa).

Belongs to the universal ribosomal protein uL5 family. In terms of assembly, part of the 50S ribosomal subunit; part of the 5S rRNA/L5/L18/L25 subcomplex. Contacts the 5S rRNA and the P site tRNA. Forms a bridge to the 30S subunit in the 70S ribosome.

This is one of the proteins that bind and probably mediate the attachment of the 5S RNA into the large ribosomal subunit, where it forms part of the central protuberance. In the 70S ribosome it contacts protein S13 of the 30S subunit (bridge B1b), connecting the 2 subunits; this bridge is implicated in subunit movement. Contacts the P site tRNA; the 5S rRNA and some of its associated proteins might help stabilize positioning of ribosome-bound tRNAs. The protein is Large ribosomal subunit protein uL5 of Streptomyces griseus subsp. griseus (strain JCM 4626 / CBS 651.72 / NBRC 13350 / KCC S-0626 / ISP 5235).